The sequence spans 92 residues: Small ribosomal subunit protein uS19 (92 aa).

It belongs to the universal ribosomal protein uS19 family.

Functionally, protein S19 forms a complex with S13 that binds strongly to the 16S ribosomal RNA. In Malacoplasma penetrans (strain HF-2) (Mycoplasma penetrans), this protein is Small ribosomal subunit protein uS19.